A 199-amino-acid chain; its full sequence is Cell division protein SepF (199 aa).

A disordered region spans residues 15–79; the sequence is TEDGDETEVQ…PQPQQKSSTE (65 aa).

Belongs to the SepF family. As to quaternary structure, homodimer. Interacts with FtsZ.

Its subcellular location is the cytoplasm. Cell division protein that is part of the divisome complex and is recruited early to the Z-ring. Probably stimulates Z-ring formation, perhaps through the cross-linking of FtsZ protofilaments. Its function overlaps with FtsA. This Streptococcus sanguinis (strain SK36) protein is Cell division protein SepF.